The chain runs to 315 residues: 1-aminocyclopropane-1-carboxylate oxidase 1 (315 aa).

In terms of domain architecture, Fe2OG dioxygenase spans 153-253 (PNFGTKVSNY…RMSLASFYNP (101 aa)). Residues histidine 177, aspartate 179, and histidine 234 each coordinate Fe cation.

Belongs to the iron/ascorbate-dependent oxidoreductase family. Fe cation is required as a cofactor. As to expression, predominantly expressed in the petals and the stigma and style.

It catalyses the reaction 1-aminocyclopropane-1-carboxylate + L-ascorbate + O2 = ethene + L-dehydroascorbate + hydrogen cyanide + CO2 + 2 H2O. It functions in the pathway alkene biosynthesis; ethylene biosynthesis via S-adenosyl-L-methionine; ethylene from S-adenosyl-L-methionine: step 2/2. This Solanum lycopersicum (Tomato) protein is 1-aminocyclopropane-1-carboxylate oxidase 1 (ACO1).